The primary structure comprises 530 residues: MHPGRTTGKGPSTHTQIDQQPPRLLIVHIALPSWADICTNLCEALQNFFSLACSLMGPSRMSLFSLYMVQDQHECILPFVQVKGNFARLQTCISELRMLQREGCFRSQGASLRLAVEDGLQQFKQYSRHVTTRAALTYTSLEITILTSQPGKEVVKQLEEGLKDTDLARVRRFQVVEVTKGILEHVDSASPVEDTSNDESSILGTDIDLQTIDNDIVSMEIFFKAWLHNSGTDQEQIHLLLSSQCFSNISRPRDNPMCLKCDLQERLLCPSLLAGTADGSLRMDDPKGDFITLYQMASQSSASHYKLQVIKALKSSGLCESLTYGLPFILRPTSCWQLDWDELETNQQHFHALCHSLLKREWLLLAKGEPPGPGHSQRIPASTFYVIMPSHSLTLLVKAVATRELMLPSTFPLLPEDPHDDSLKNVESMLDSLELEPTYNPLHVQSHLYSHLSSIYAKPQGRLHPHWESRAPRKHPCKTGQLQTNRARATVAPLPMTPVPGRASKMPAASKSSSDAFFLPSEWEKDPSRP.

The tract at residues leucine 463–proline 530 is disordered. The span at alanine 503–alanine 516 shows a compositional bias: low complexity.

The protein resides in the cytoplasm. In terms of biological role, required for meiosis I progression during spermatogenesis. This Homo sapiens (Human) protein is Meiosis 1 arrest protein (M1AP).